A 90-amino-acid chain; its full sequence is Small ribosomal subunit protein uS17 (90 aa).

Belongs to the universal ribosomal protein uS17 family. As to quaternary structure, part of the 30S ribosomal subunit.

Functionally, one of the primary rRNA binding proteins, it binds specifically to the 5'-end of 16S ribosomal RNA. This is Small ribosomal subunit protein uS17 from Gluconobacter oxydans (strain 621H) (Gluconobacter suboxydans).